Reading from the N-terminus, the 345-residue chain is Gibberellin receptor GID1A (345 aa).

Ala-2 is subject to N-acetylalanine. An Involved in the stabilization of the negatively charged intermediate by the formation of the oxyanion hole motif is present at residues 113-115 (HGG). Gibberellin A4-binding positions include 115-116 (GS), Tyr-127, and Ser-191. Ser-116, Tyr-127, Ser-191, and Phe-238 together coordinate gibberellin A3. Residue Ser-191 is part of the active site. Residue Asp-289 is part of the active site. Gly-320 contacts gibberellin A4. Gly-320 contacts gibberellin A3.

It belongs to the 'GDXG' lipolytic enzyme family. In terms of assembly, interacts (via N-terminus) with the DELLA proteins GAI, RGA, RGL1, RGL2 and RGL3 (via N-terminus) in a GA-dependent manner. Widely expressed.

The protein resides in the nucleus. Functionally, functions as a soluble gibberellin (GA) receptor. GA is an essential hormone that regulates growth and development in plants. Binds with high affinity the biologically active gibberellin GA4, but has no affinity for the biologically inactive GAs. In response to GA, interacts with specific DELLA proteins, known as repressors of GA-induced growth, and targets them for degradation via proteasome. Seems to be required for GA signaling that controls root growth, seed germination, stem elongation and flower development. Partially redundant with GID1B and GID1C. This Arabidopsis thaliana (Mouse-ear cress) protein is Gibberellin receptor GID1A (GID1A).